The following is a 272-amino-acid chain: Neurogenin-2 (272 aa).

The segment at 30–69 is disordered; that stretch reads LTPLSSSADEEEEEEPGASGGARRQRGAEAGQGARGGVAA. A bHLH domain is found at 112–164; it reads TRRLKANNRERNRMHNLNAALDALREVLPTFPEDAKLTKIETLRFAHNYIWAL. Residues 197-239 are compositionally biased toward low complexity; it reads ASAALSSSGDSPSPASTWSCTNSPAPSSSVSSNSTSPYSCTLS. Positions 197-264 are disordered; sequence ASAALSSSGD…PPDKHRYAPH (68 aa).

As to quaternary structure, efficient DNA binding requires dimerization with another bHLH protein.

It localises to the nucleus. Its function is as follows. Transcriptional regulator. Involved in neuronal differentiation. Activates transcription by binding to the E box (5'-CANNTG-3'). In Homo sapiens (Human), this protein is Neurogenin-2 (NEUROG2).